A 260-amino-acid polypeptide reads, in one-letter code: UPF0246 protein APL_0602 (260 aa).

Belongs to the UPF0246 family.

The chain is UPF0246 protein APL_0602 from Actinobacillus pleuropneumoniae serotype 5b (strain L20).